Consider the following 395-residue polypeptide: Probable FMNH2-dependent monooxygenase SfnC (395 aa).

In terms of biological role, involved in the dimethyl sulfide degradation pathway. The sequence is that of Probable FMNH2-dependent monooxygenase SfnC from Pseudomonas putida (Arthrobacter siderocapsulatus).